The chain runs to 392 residues: Zinc finger protein ham-2 (392 aa).

C2H2-type zinc fingers lie at residues 16 to 39 and 43 to 66; these read FPCS…MQAH and YTCT…YRVH. Residues 72-95 form a C2H2-type 3; degenerate zinc finger; the sequence is FMCRCCNWAFPDKTSLHIHMQSML. Disordered stretches follow at residues 106–130 and 278–303; these read LAKS…PFSP and HISH…HSGE. Positions 112–123 are enriched in polar residues; the sequence is VVDSTSESGSPR. Positions 289–303 are enriched in low complexity; that stretch reads SDSHISGGSSSHSGE.

Its subcellular location is the nucleus. Functionally, probable transcription factor that acts downstream of egl-15, to promote migration of the HSN motor neurons from the tail to the gonad primordium during HSN cell differentiation. This is Zinc finger protein ham-2 from Caenorhabditis elegans.